We begin with the raw amino-acid sequence, 282 residues long: Polyamine aminopropyltransferase (282 aa).

The PABS domain maps to 11–239; that stretch reads IEWYPRGYGV…SPWSFLVGVK (229 aa). Residue Gln-36 participates in S-methyl-5'-thioadenosine binding. Spermidine contacts are provided by His-67 and Asp-91. Residues Glu-111 and 142–143 contribute to the S-methyl-5'-thioadenosine site; that span reads DG. Asp-160 functions as the Proton acceptor in the catalytic mechanism. 160–163 contributes to the spermidine binding site; the sequence is DSTD. Pro-167 contributes to the S-methyl-5'-thioadenosine binding site.

Belongs to the spermidine/spermine synthase family. Homodimer or homotetramer.

It is found in the cytoplasm. It carries out the reaction S-adenosyl 3-(methylsulfanyl)propylamine + putrescine = S-methyl-5'-thioadenosine + spermidine + H(+). It functions in the pathway amine and polyamine biosynthesis; spermidine biosynthesis; spermidine from putrescine: step 1/1. Its function is as follows. Catalyzes the irreversible transfer of a propylamine group from the amino donor S-adenosylmethioninamine (decarboxy-AdoMet) to putrescine (1,4-diaminobutane) to yield spermidine. The polypeptide is Polyamine aminopropyltransferase (Thermococcus onnurineus (strain NA1)).